The following is a 327-amino-acid chain: Putative pumilio homolog 19 (327 aa).

The PUM-HD domain occupies 1 to 324 (MAVSDNTFSM…NIANILDTFR (324 aa)). 6 Pumilio repeats span residues 79-114 (SDSD…FCAA), 115-149 (ILRR…ALYE), 150-185 (RILY…DQLL), 186-222 (ELVV…NIAV), 223-260 (NLYG…ELLG), and 261-295 (CDGD…DLFW).

It is found in the cytoplasm. Functionally, sequence-specific RNA-binding protein that regulates translation and mRNA stability by binding the 3'-UTR of target mRNAs. In Arabidopsis thaliana (Mouse-ear cress), this protein is Putative pumilio homolog 19 (APUM19).